The sequence spans 465 residues: Cysteine--tRNA ligase (465 aa).

Cys30 is a Zn(2+) binding site. The 'HIGH' region motif lies at 32 to 42 (ITVYDYCHVGH). Residues Cys214, His239, and Glu243 each coordinate Zn(2+). A 'KMSKS' region motif is present at residues 271–275 (KMSKS). Lys274 lines the ATP pocket.

Belongs to the class-I aminoacyl-tRNA synthetase family. As to quaternary structure, monomer. Requires Zn(2+) as cofactor.

Its subcellular location is the cytoplasm. It carries out the reaction tRNA(Cys) + L-cysteine + ATP = L-cysteinyl-tRNA(Cys) + AMP + diphosphate. The sequence is that of Cysteine--tRNA ligase from Burkholderia orbicola (strain MC0-3).